Reading from the N-terminus, the 366-residue chain is L-idonate 5-dehydrogenase (366 aa).

7 residues coordinate Zn(2+): cysteine 56, histidine 81, cysteine 111, cysteine 114, cysteine 117, cysteine 125, and glutamate 167.

This sequence belongs to the zinc-containing alcohol dehydrogenase family. It depends on Zn(2+) as a cofactor.

It carries out the reaction L-idonate + NAD(+) = 5-dehydro-D-gluconate + NADH + H(+). It functions in the pathway carbohydrate acid metabolism; L-idonate degradation. In terms of biological role, involved in the catabolism of ascorbate to tartrate. The enzyme has no activity with NADP(+). The chain is L-idonate 5-dehydrogenase from Vitis vinifera (Grape).